Reading from the N-terminus, the 342-residue chain is Ribosomal RNA small subunit methyltransferase C (342 aa).

The protein belongs to the methyltransferase superfamily. RsmC family. In terms of assembly, monomer.

The protein localises to the cytoplasm. The catalysed reaction is guanosine(1207) in 16S rRNA + S-adenosyl-L-methionine = N(2)-methylguanosine(1207) in 16S rRNA + S-adenosyl-L-homocysteine + H(+). Specifically methylates the guanine in position 1207 of 16S rRNA in the 30S particle. This chain is Ribosomal RNA small subunit methyltransferase C, found in Salmonella newport (strain SL254).